The sequence spans 89 residues: Small ribosomal subunit protein uS15 (89 aa).

It belongs to the universal ribosomal protein uS15 family. In terms of assembly, part of the 30S ribosomal subunit. Forms a bridge to the 50S subunit in the 70S ribosome, contacting the 23S rRNA.

Functionally, one of the primary rRNA binding proteins, it binds directly to 16S rRNA where it helps nucleate assembly of the platform of the 30S subunit by binding and bridging several RNA helices of the 16S rRNA. Forms an intersubunit bridge (bridge B4) with the 23S rRNA of the 50S subunit in the ribosome. In Lactobacillus johnsonii (strain CNCM I-12250 / La1 / NCC 533), this protein is Small ribosomal subunit protein uS15.